Reading from the N-terminus, the 477-residue chain is Protein nucleotidyltransferase YdiU (477 aa).

ATP-binding residues include Gly-89, Gly-91, Arg-92, Lys-112, Asp-124, Gly-125, Arg-178, and Arg-185. The Proton acceptor role is filled by Asp-257. Positions 258 and 267 each coordinate Mg(2+). Asp-267 contacts ATP.

Belongs to the SELO family. The cofactor is Mg(2+). Requires Mn(2+) as cofactor.

It catalyses the reaction L-seryl-[protein] + ATP = 3-O-(5'-adenylyl)-L-seryl-[protein] + diphosphate. The enzyme catalyses L-threonyl-[protein] + ATP = 3-O-(5'-adenylyl)-L-threonyl-[protein] + diphosphate. It carries out the reaction L-tyrosyl-[protein] + ATP = O-(5'-adenylyl)-L-tyrosyl-[protein] + diphosphate. The catalysed reaction is L-histidyl-[protein] + UTP = N(tele)-(5'-uridylyl)-L-histidyl-[protein] + diphosphate. It catalyses the reaction L-seryl-[protein] + UTP = O-(5'-uridylyl)-L-seryl-[protein] + diphosphate. The enzyme catalyses L-tyrosyl-[protein] + UTP = O-(5'-uridylyl)-L-tyrosyl-[protein] + diphosphate. Its function is as follows. Nucleotidyltransferase involved in the post-translational modification of proteins. It can catalyze the addition of adenosine monophosphate (AMP) or uridine monophosphate (UMP) to a protein, resulting in modifications known as AMPylation and UMPylation. This chain is Protein nucleotidyltransferase YdiU, found in Synechocystis sp. (strain ATCC 27184 / PCC 6803 / Kazusa).